The primary structure comprises 423 residues: Sulfate adenylyltransferase (423 aa).

It belongs to the sulfate adenylyltransferase family.

The enzyme catalyses sulfate + ATP + H(+) = adenosine 5'-phosphosulfate + diphosphate. The protein operates within sulfur metabolism; hydrogen sulfide biosynthesis; sulfite from sulfate: step 1/3. The polypeptide is Sulfate adenylyltransferase (Desulfovibrio desulfuricans (strain ATCC 27774 / DSM 6949 / MB)).